The sequence spans 103 residues: MMGSKMASASRVVQVVKPHTPLIRFPDRRDNPKPNVSEVLRSAGLPSHTSSISQHSKGSKSPDWLMHQGPPDTAEMIKTLPQKYRRKLVSQEEIEFIQRGGPE.

Residue Met-1 is modified to N-acetylmethionine. The residue at position 5 (Lys-5) is an N6-succinyllysine. Positions Ile-23 to Pro-70 are disordered. The span at Ser-47 to Ser-61 shows a compositional bias: low complexity. Phosphoserine occurs at positions 61 and 90.

The protein belongs to the alpha-ketoglutarate dehydrogenase component 4 family. Component of the 2-oxoglutarate dehydrogenase complex (OGDHC), composed of OGDH (2-oxoglutarate dehydrogenase; also called E1 subunit), DLST (dihydrolipoamide succinyltransferase; also called E2 subunit) and DLD (dihydrolipoamide dehydrogenase; also called E3 subunit), and the assembly factor KGD4. Within OGDHC complex, interacts (via N-terminus) with E3 subunit and (via C-terminus) with E2 subunit.

Its subcellular location is the mitochondrion. Its function is as follows. Molecular adapter that is necessary to form a stable 2-oxoglutarate dehydrogenase enzyme complex (OGDHC). Enables the specific recruitment of E3 subunit to E2 subunit in the 2-oxoglutarate dehydrogenase complex (OGDHC). This is Alpha-ketoglutarate dehydrogenase component 4 (KGD4) from Bos taurus (Bovine).